A 196-amino-acid chain; its full sequence is uncharacterized protein (196 aa).

This sequence belongs to the flavoredoxin family. FMN is required as a cofactor.

This is an uncharacterized protein from Aquifex aeolicus (strain VF5).